Here is a 156-residue protein sequence, read N- to C-terminus: Ribonuclease H (156 aa).

Residues 7–148 (QDKIVMIATD…ADQLASDAAI (142 aa)) enclose the RNase H type-1 domain. 4 residues coordinate Mg(2+): aspartate 16, glutamate 54, aspartate 76, and aspartate 140.

Belongs to the RNase H family. As to quaternary structure, monomer. Mg(2+) is required as a cofactor.

It localises to the cytoplasm. The enzyme catalyses Endonucleolytic cleavage to 5'-phosphomonoester.. Endonuclease that specifically degrades the RNA of RNA-DNA hybrids. The chain is Ribonuclease H (rnhA) from Zymomonas mobilis subsp. mobilis (strain ATCC 31821 / ZM4 / CP4).